Consider the following 429-residue polypeptide: Actin-like protein 6A (429 aa).

N-acetylserine is present on S2. K62 participates in a covalent cross-link: Glycyl lysine isopeptide (Lys-Gly) (interchain with G-Cter in SUMO2). Residues S86 and S233 each carry the phosphoserine modification.

Belongs to the actin family. As to quaternary structure, component of numerous complexes with chromatin remodeling and histone acetyltransferase activity. Component of the NuA4 histone acetyltransferase complex which contains the catalytic subunit KAT5/TIP60 and the subunits EP400, TRRAP/PAF400, BRD8/SMAP, EPC1, DMAP1/DNMAP1, RUVBL1/TIP49, RUVBL2, ING3, actin, ACTL6A/BAF53A, MORF4L1/MRG15, MORF4L2/MRGX, MRGBP, YEATS4/GAS41, VPS72/YL1 and MEAF6. The NuA4 complex interacts with MYC and the adenovirus E1A protein. Component of a NuA4-related complex which contains EP400, TRRAP/PAF400, SRCAP, BRD8/SMAP, EPC1, DMAP1/DNMAP1, RUVBL1/TIP49, RUVBL2, actin, ACTL6A/BAF53A, VPS72 and YEATS4/GAS41. Component of the multiprotein chromatin-remodeling complexes SWI/SNF: SWI/SNF-A (BAF), SWI/SNF-B (PBAF) and related complexes. The canonical complex contains a catalytic subunit (either SMARCA4/BRG1/BAF190A or SMARCA2/BRM/BAF190B) and at least SMARCE1, ACTL6A/BAF53, SMARCC1/BAF155, SMARCC2/BAF170, and SMARCB1/SNF5/BAF47. Other subunits specific to each of the complexes may also be present permitting several possible combinations developmentally and tissue specific. Component of the BAF complex, which includes at least actin (ACTB), ARID1A/BAF250A, ARID1B/BAF250B, SMARCA2/BRM, SMARCA4/BRG1/BAF190A, ACTL6A/BAF53, ACTL6B/BAF53B, SMARCE1/BAF57, SMARCC1/BAF155, SMARCC2/BAF170, SMARCB1/SNF5/INI1, and one or more SMARCD1/BAF60A, SMARCD2/BAF60B, or SMARCD3/BAF60C. In muscle cells, the BAF complex also contains DPF3. Component of the BAF53 complex, at least composed of ACTL6A/BAF53A, RUVBL1/TIP49, SMARCA2/BRM/BAF190B and TRRAP/PAF400, and which may also include a HAT activity related to, but distinct from, that of KAT5. Component of neural progenitors-specific chromatin remodeling complex (npBAF complex) composed of at least, ARID1A/BAF250A or ARID1B/BAF250B, SMARCD1/BAF60A, SMARCD3/BAF60C, SMARCA2/BRM/BAF190B, SMARCA4/BRG1/BAF190A, SMARCB1/BAF47, SMARCC1/BAF155, SMARCE1/BAF57, SMARCC2/BAF170, PHF10/BAF45A, ACTL6A/BAF53A and actin. Component of SWI/SNF (GBAF) subcomplex, which includes at least BICRA or BICRAL (mutually exclusive), BRD9, SS18, SMARCA2/BRM, SMARCA4/BRG1/BAF190A, ACTL6A/BAF53, SMARCC1/BAF155, and SMARCD1/BAF60A. May be a component of the SWI/SNF-B (PBAF) chromatin remodeling complex, at least composed of SMARCA4/BRG1, SMARCB1/BAF47/SNF5, ACTL6A/BAF53A or ACTL6B/BAF53B, SMARCE1/BAF57, SMARCD1/BAF60A, SMARCD2/BAF60B, perhaps SMARCD3/BAF60C, SMARCC1/BAF155, SMARCC2/BAF170, PBRM1/BAF180, ARID2/BAF200 and actin. Interacts with SMARCA4/BRG1/BAF190A. Interacts with PHF10/BAF45A. Component of the chromatin remodeling INO80 complex; specifically part of a complex module associated with the DBINO domain of INO80. Interacts with DPF2. As to expression, widely expressed. Expressed selectively in neural stem and progenitor cells (at protein level).

Its subcellular location is the nucleus. Functionally, involved in transcriptional activation and repression of select genes by chromatin remodeling (alteration of DNA-nucleosome topology). Component of SWI/SNF chromatin remodeling complexes that carry out key enzymatic activities, changing chromatin structure by altering DNA-histone contacts within a nucleosome in an ATP-dependent manner. Required for maximal ATPase activity of SMARCA4/BRG1/BAF190A and for association of the SMARCA4/BRG1/BAF190A containing remodeling complex BAF with chromatin/nuclear matrix. Belongs to the neural progenitors-specific chromatin remodeling complex (npBAF complex) and is required for the proliferation of neural progenitors. During neural development a switch from a stem/progenitor to a postmitotic chromatin remodeling mechanism occurs as neurons exit the cell cycle and become committed to their adult state. The transition from proliferating neural stem/progenitor cells to postmitotic neurons requires a switch in subunit composition of the npBAF and nBAF complexes. As neural progenitors exit mitosis and differentiate into neurons, npBAF complexes which contain ACTL6A/BAF53A and PHF10/BAF45A, are exchanged for homologous alternative ACTL6B/BAF53B and DPF1/BAF45B or DPF3/BAF45C subunits in neuron-specific complexes (nBAF). The npBAF complex is essential for the self-renewal/proliferative capacity of the multipotent neural stem cells. The nBAF complex along with CREST plays a role regulating the activity of genes essential for dendrite growth. Component of the NuA4 histone acetyltransferase (HAT) complex which is involved in transcriptional activation of select genes principally by acetylation of nucleosomal histones H4 and H2A. This modification may both alter nucleosome - DNA interactions and promote interaction of the modified histones with other proteins which positively regulate transcription. This complex may be required for the activation of transcriptional programs associated with oncogene and proto-oncogene mediated growth induction, tumor suppressor mediated growth arrest and replicative senescence, apoptosis, and DNA repair. NuA4 may also play a direct role in DNA repair when recruited to sites of DNA damage. Putative core component of the chromatin remodeling INO80 complex which is involved in transcriptional regulation, DNA replication and probably DNA repair. This is Actin-like protein 6A (Actl6a) from Mus musculus (Mouse).